Here is a 404-residue protein sequence, read N- to C-terminus: Cysteine desulfurase IscS (404 aa).

Pyridoxal 5'-phosphate-binding positions include 75-76 (AT), N155, Q183, and 203-205 (SGH). An N6-(pyridoxal phosphate)lysine modification is found at K206. T243 lines the pyridoxal 5'-phosphate pocket. The active-site Cysteine persulfide intermediate is C328. [2Fe-2S] cluster is bound at residue C328.

This sequence belongs to the class-V pyridoxal-phosphate-dependent aminotransferase family. NifS/IscS subfamily. Homodimer. Forms a heterotetramer with IscU, interacts with other sulfur acceptors. Pyridoxal 5'-phosphate is required as a cofactor.

The protein localises to the cytoplasm. The enzyme catalyses (sulfur carrier)-H + L-cysteine = (sulfur carrier)-SH + L-alanine. Its pathway is cofactor biosynthesis; iron-sulfur cluster biosynthesis. In terms of biological role, master enzyme that delivers sulfur to a number of partners involved in Fe-S cluster assembly, tRNA modification or cofactor biosynthesis. Catalyzes the removal of elemental sulfur atoms from cysteine to produce alanine. Functions as a sulfur delivery protein for Fe-S cluster synthesis onto IscU, an Fe-S scaffold assembly protein, as well as other S acceptor proteins. This chain is Cysteine desulfurase IscS, found in Edwardsiella ictaluri (strain 93-146).